Consider the following 767-residue polypeptide: TBC1 domain family member 16 (767 aa).

2 disordered regions span residues 93 to 138 (EALR…TPKD) and 169 to 228 (GVDG…SFDS). The segment covering 107–117 (KAPRPRGRRTR) has biased composition (basic residues). The span at 175-194 (PASQPACSPSGILSTVSPQD) shows a compositional bias: polar residues. The segment covering 197–206 (EEGREPRPEA) has biased composition (basic and acidic residues). The region spanning 425-635 (GIDVSIRGEV…RIWEACWAHY (211 aa)) is the Rab-GAP TBC domain. The segment at 729–767 (HPGSESCPYGGTVEMPSPKSLREGKKGPKTPQDGFGFRR) is disordered.

Its function is as follows. May act as a GTPase-activating protein for Rab family protein(s). The polypeptide is TBC1 domain family member 16 (TBC1D16) (Homo sapiens (Human)).